The chain runs to 637 residues: ATP-dependent zinc metalloprotease FtsH (637 aa).

Topologically, residues 1–6 are cytoplasmic; the sequence is MNNQGR. Residues 7-27 form a helical membrane-spanning segment; that stretch reads SILAWAALFIFVILLFNVFQS. Topologically, residues 28–103 are periplasmic; the sequence is DGLLGVRNNI…VVPLETRMNT (76 aa). Residues 104 to 124 form a helical membrane-spanning segment; the sequence is FLGFLISWFPMLLLIGVWVFF. Residues 125 to 637 lie on the Cytoplasmic side of the membrane; it reads MRQMHGGGKA…TKDKKENIIS (513 aa). 195–202 lines the ATP pocket; that stretch reads GPPGTGKT. A Zn(2+)-binding site is contributed by H417. E418 is a catalytic residue. H421 and D495 together coordinate Zn(2+).

In the central section; belongs to the AAA ATPase family. The protein in the C-terminal section; belongs to the peptidase M41 family. Homohexamer. Requires Zn(2+) as cofactor.

It localises to the cell inner membrane. In terms of biological role, acts as a processive, ATP-dependent zinc metallopeptidase for both cytoplasmic and membrane proteins. Plays a role in the quality control of integral membrane proteins. In Rickettsia prowazekii (strain Madrid E), this protein is ATP-dependent zinc metalloprotease FtsH.